A 201-amino-acid polypeptide reads, in one-letter code: Cell division protein SepF (201 aa).

The span at 27–38 shows a compositional bias: basic and acidic residues; the sequence is VQERTSVQRDSR. A disordered region spans residues 27–99; it reads VQERTSVQRD…PRIQNKDSVR (73 aa). Polar residues-rich tracts occupy residues 43-54 and 82-92; these read QEASQRSHMTNS and DNSYQQATPRI.

This sequence belongs to the SepF family. As to quaternary structure, homodimer. Interacts with FtsZ.

It is found in the cytoplasm. Cell division protein that is part of the divisome complex and is recruited early to the Z-ring. Probably stimulates Z-ring formation, perhaps through the cross-linking of FtsZ protofilaments. Its function overlaps with FtsA. The polypeptide is Cell division protein SepF (Streptococcus agalactiae serotype III (strain NEM316)).